A 334-amino-acid chain; its full sequence is DNA-directed RNA polymerase subunit alpha (334 aa).

The tract at residues 1–234 is alpha N-terminal domain (alpha-NTD); that stretch reads MQRSVHELLT…QQLAVFVDFD (234 aa). The interval 248–334 is alpha C-terminal domain (alpha-CTD); it reads IDPILLRPVD…LRGDDRVLGG (87 aa).

It belongs to the RNA polymerase alpha chain family. As to quaternary structure, homodimer. The RNAP catalytic core consists of 2 alpha, 1 beta, 1 beta' and 1 omega subunit. When a sigma factor is associated with the core the holoenzyme is formed, which can initiate transcription.

It carries out the reaction RNA(n) + a ribonucleoside 5'-triphosphate = RNA(n+1) + diphosphate. Its function is as follows. DNA-dependent RNA polymerase catalyzes the transcription of DNA into RNA using the four ribonucleoside triphosphates as substrates. This is DNA-directed RNA polymerase subunit alpha from Marinobacter nauticus (strain ATCC 700491 / DSM 11845 / VT8) (Marinobacter aquaeolei).